The following is a 199-amino-acid chain: Probable thymidylate kinase (199 aa).

Residue 9-16 (GIDGCGKT) coordinates ATP.

This sequence belongs to the thymidylate kinase family.

It carries out the reaction dTMP + ATP = dTDP + ADP. The polypeptide is Probable thymidylate kinase (Methanococcus maripaludis (strain C7 / ATCC BAA-1331)).